The following is a 1072-amino-acid chain: Carbamoyl phosphate synthase large chain (1072 aa).

The tract at residues 1-401 is carboxyphosphate synthetic domain; the sequence is MPKRLDINTI…SLLKAVRSLE (401 aa). 12 residues coordinate ATP: Arg129, Arg169, Gly175, Gly176, Lys208, Ile210, Glu215, Gly241, Val242, His243, Gln284, and Glu298. The ATP-grasp 1 domain maps to 133–327; the sequence is RTLMQDLNEP…IAKLAAKIAV (195 aa). The Mg(2+) site is built by Gln284, Glu298, and Asn300. The Mn(2+) site is built by Gln284, Glu298, and Asn300. The segment at 402–546 is oligomerization domain; sequence LGIYHLELDH…YSTYADENES (145 aa). The segment at 547-929 is carbamoyl phosphate synthetic domain; the sequence is IVTDRKSVVV…ALYKGLVASG (383 aa). The 191-residue stretch at 671–861 folds into the ATP-grasp 2 domain; that stretch reads EAALTKLGIP…MANVATKVIL (191 aa). The ATP site is built by Arg707, Arg746, Glu752, Gly777, Val778, His779, Ser780, Gln820, and Glu832. Mg(2+) contacts are provided by Gln820, Glu832, and Asn834. Residues Gln820, Glu832, and Asn834 each coordinate Mn(2+). An MGS-like domain is found at 930–1072; the sequence is INIPTHGSVI…QTKRHEVVHA (143 aa). The interval 930–1072 is allosteric domain; it reads INIPTHGSVI…QTKRHEVVHA (143 aa).

It belongs to the CarB family. In terms of assembly, composed of two chains; the small (or glutamine) chain promotes the hydrolysis of glutamine to ammonia, which is used by the large (or ammonia) chain to synthesize carbamoyl phosphate. Tetramer of heterodimers (alpha,beta)4. Requires Mg(2+) as cofactor. The cofactor is Mn(2+).

It catalyses the reaction hydrogencarbonate + L-glutamine + 2 ATP + H2O = carbamoyl phosphate + L-glutamate + 2 ADP + phosphate + 2 H(+). It carries out the reaction hydrogencarbonate + NH4(+) + 2 ATP = carbamoyl phosphate + 2 ADP + phosphate + 2 H(+). It functions in the pathway amino-acid biosynthesis; L-arginine biosynthesis; carbamoyl phosphate from bicarbonate: step 1/1. It participates in pyrimidine metabolism; UMP biosynthesis via de novo pathway; (S)-dihydroorotate from bicarbonate: step 1/3. Large subunit of the glutamine-dependent carbamoyl phosphate synthetase (CPSase). CPSase catalyzes the formation of carbamoyl phosphate from the ammonia moiety of glutamine, carbonate, and phosphate donated by ATP, constituting the first step of 2 biosynthetic pathways, one leading to arginine and/or urea and the other to pyrimidine nucleotides. The large subunit (synthetase) binds the substrates ammonia (free or transferred from glutamine from the small subunit), hydrogencarbonate and ATP and carries out an ATP-coupled ligase reaction, activating hydrogencarbonate by forming carboxy phosphate which reacts with ammonia to form carbamoyl phosphate. The sequence is that of Carbamoyl phosphate synthase large chain from Bacillus cereus (strain AH187).